The following is a 557-amino-acid chain: Estrogen receptor beta (557 aa).

Residues M1–Y154 form a modulating region. NR C4-type zinc fingers lie at residues C155 to C175 and C191 to C215. The nuclear receptor DNA-binding region spans C155–M220. The interval L240–K268 is disordered. In terms of domain architecture, NR LBD spans T272–H508. The interval S513–Q557 is disordered. Residues G539–Q557 show a composition bias toward polar residues.

This sequence belongs to the nuclear hormone receptor family. NR3 subfamily. As to quaternary structure, binds DNA as a homodimer. Can form a heterodimer with ER-alpha.

It localises to the nucleus. Binds estrogens with an affinity similar to that of ER-alpha, and activates expression of reporter genes containing estrogen response elements (ERE) in an estrogen-dependent manner. The chain is Estrogen receptor beta (esr2) from Oreochromis niloticus (Nile tilapia).